The sequence spans 136 residues: Plastocyanin (136 aa).

Residues 1-34 form the signal peptide; sequence MSLVFNLVKRLQLILLSLVVGGLAVAFLSNPAAA. The 102-residue stretch at 35–136 folds into the Plastocyanin-like domain; sequence ETYIVKMGSD…GMVGKIIVNG (102 aa). Cu cation contacts are provided by H73, C120, H123, and M128.

This sequence belongs to the plastocyanin family. Requires Cu(2+) as cofactor.

The protein localises to the cellular thylakoid membrane. Functionally, participates in electron transfer between P700 and the cytochrome b6-f complex in photosystem I. This is Plastocyanin from Synechococcus sp. (strain JA-2-3B'a(2-13)) (Cyanobacteria bacterium Yellowstone B-Prime).